The primary structure comprises 763 residues: Eukaryotic translation initiation factor 3 subunit B (763 aa).

The tract at residues 1–136 (MKNFLPRTLK…LFVECGSMND (136 aa)) is sufficient for interaction with HCR1 and TIF32. The interval 28–261 (RNTQLKRSKI…GVTAWGGPNF (234 aa)) is sufficient for interaction with PIC8. Phosphoserine is present on S61. Y67 carries the post-translational modification Phosphotyrosine. An RRM domain is found at 77 to 162 (QYIVVNGAPV…HRLFLYTMKD (86 aa)). WD repeat units follow at residues 228-266 (RENW…RLRR), 277-325 (VSPN…LMAT), 373-416 (LKPS…SACT), 484-524 (ELKD…IRFY), 544-589 (IPKT…EKNI), and 605-650 (PTYS…VKED). S669 is subject to Phosphoserine.

It belongs to the eIF-3 subunit B family. In terms of assembly, the eukaryotic translation initiation factor 3 (eIF-3) core complex is composed of TIF32, PRT1, NIP1, TIF34 and TIF35. A subcomplex of TIF32, NIP1 and PRT1 mediates the interaction with eIF-1, TIF5/eIF-5 and HCR1. The factors eIF-1, eIF-2, eIF-3, TIF5/eIF-5 and methionyl-tRNAi form a multifactor complex (MFC) that may bind to the 40S ribosome.

It is found in the cytoplasm. RNA-binding component of the eukaryotic translation initiation factor 3 (eIF-3) complex, which is involved in protein synthesis of a specialized repertoire of mRNAs and, together with other initiation factors, stimulates binding of mRNA and methionyl-tRNAi to the 40S ribosome. The eIF-3 complex specifically targets and initiates translation of a subset of mRNAs involved in cell proliferation. The protein is Eukaryotic translation initiation factor 3 subunit B of Saccharomyces cerevisiae (strain ATCC 204508 / S288c) (Baker's yeast).